The primary structure comprises 208 residues: Flavin-dependent thymidylate synthase (208 aa).

Positions 1-208 (MEVICKHYTP…QYLFEDCLKH (208 aa)) constitute a ThyX domain. FAD-binding positions include S50 and 74–76 (RHR). DUMP-binding positions include 71–74 (ELSR), 84–86 (SSR), and K147. The ThyX motif signature appears at 74–84 (RHRIASLSVKS). Residues 163–165 (NAR) and N169 contribute to the FAD site. A dUMP-binding site is contributed by R174. The active-site Involved in ionization of N3 of dUMP, leading to its activation is the R174.

The protein belongs to the thymidylate synthase ThyX family. As to quaternary structure, homotetramer. Requires FAD as cofactor.

It carries out the reaction dUMP + (6R)-5,10-methylene-5,6,7,8-tetrahydrofolate + NADPH + H(+) = dTMP + (6S)-5,6,7,8-tetrahydrofolate + NADP(+). It participates in pyrimidine metabolism; dTTP biosynthesis. Catalyzes the reductive methylation of 2'-deoxyuridine-5'-monophosphate (dUMP) to 2'-deoxythymidine-5'-monophosphate (dTMP) while utilizing 5,10-methylenetetrahydrofolate (mTHF) as the methyl donor, and NADPH and FADH(2) as the reductant. This chain is Flavin-dependent thymidylate synthase, found in Helicobacter pylori (strain J99 / ATCC 700824) (Campylobacter pylori J99).